Consider the following 718-residue polypeptide: Telomeric repeat-binding factor 2 (718 aa).

2 disordered regions span residues 1–22 (MAAK…RSDD) and 219–286 (NSER…GAPE). Composition is skewed to basic and acidic residues over residues 8-22 (AAME…RSDD) and 219-228 (NSERAEEPKR). Residues 24-220 (EQAVNRWVLQ…LVTMMKSLNS (197 aa)) are TRFH dimerization. Tandem repeats lie at residues 257–269 (GTLR…GGVA), 270–282 (GAPS…KDPT), 283–295 (GAPE…KDAV), 296–308 (RAPC…EDSQ), 309–321 (GTPR…RDVM), 322–334 (GAPS…KDLL), 335–347 (GAPK…RDVV), 348–360 (RAPS…KDPV), 361–373 (GTPG…RDVA), 374–386 (RAPS…KNLP), 387–399 (GAPE…KNTV), 400–412 (RAPS…KDLV), 413–425 (RAPK…RDVV), 426–438 (RAPS…KDTA), and 439–451 (GASE…SYPT). Residues 257–451 (GTLRRAETAG…EPMKSASYPT (195 aa)) form a 15 X 13 AA approximate tandem repeats region. Disordered regions lie at residues 342-455 (TARD…ASQP) and 524-641 (FNKL…WSDE). Residues 405–425 (AERRKDLVRAPKRAETARDVV) are compositionally biased toward basic and acidic residues. Over residues 533–543 (PSPQQMSPSVS) the composition is skewed to polar residues. The Nuclear localization signal signature appears at 545–550 (RTKRRK). Over residues 584–595 (SQCSKSSESPDS) the composition is skewed to low complexity. Over residues 615–630 (PVSTKRSSQQRWNSSY) the composition is skewed to polar residues. The 54-residue stretch at 664-717 (KKQKWTVQESEWIKDGVRKYGEGRWKTISEKYPFQNRTSVQIKDRYRTMKKLGI) folds into the HTH myb-type domain. Residues 688–713 (WKTISEKYPFQNRTSVQIKDRYRTMK) constitute a DNA-binding region (H-T-H motif).

As to quaternary structure, homodimer. Component of the shelterin complex (telosome). Interacts with TERF2IP/RAP1. In terms of tissue distribution, highly expressed in embryo.

The protein localises to the nucleus. The protein resides in the chromosome. Its subcellular location is the telomere. Binds the telomeric double-stranded 5'-TTAGGG-3' repeat and plays a central role in telomere maintenance and protection against end-to-end fusion of chromosomes. In addition to its telomeric DNA-binding role, required to recruit a number of factors and enzymes required for telomere protection, including the shelterin complex, TERF2IP/RAP1 and DCLRE1B/Apollo. Component of the shelterin complex (telosome) that is involved in the regulation of telomere length and protection. Shelterin associates with arrays of double-stranded 5'-TTAGGG-3' repeats added by telomerase and protects chromosome ends; without its protective activity, telomeres are no longer hidden from the DNA damage surveillance and chromosome ends are inappropriately processed by DNA repair pathways. Together with DCLRE1B/Apollo, plays a key role in telomeric loop (T loop) formation by generating 3' single-stranded overhang at the leading end telomeres: T loops have been proposed to protect chromosome ends from degradation and repair. Required both to recruit DCLRE1B/Apollo to telomeres and activate the exonuclease activity of DCLRE1B/Apollo. Together with DCLRE1B/Apollo, required to control the amount of DNA topoisomerase (TOP1, TOP2A and TOP2B) needed for telomere replication during fork passage and prevent aberrant telomere topology. Recruits TERF2IP/RAP1 to telomeres, thereby participating in to repressing homology-directed repair (HDR), which can affect telomere length. This is Telomeric repeat-binding factor 2 (TERF2) from Gallus gallus (Chicken).